The sequence spans 133 residues: Holo-[acyl-carrier-protein] synthase (133 aa).

Residues aspartate 8 and glutamate 64 each contribute to the Mg(2+) site.

The protein belongs to the P-Pant transferase superfamily. AcpS family. Requires Mg(2+) as cofactor.

The protein resides in the cytoplasm. The catalysed reaction is apo-[ACP] + CoA = holo-[ACP] + adenosine 3',5'-bisphosphate + H(+). Its function is as follows. Transfers the 4'-phosphopantetheine moiety from coenzyme A to a Ser of acyl-carrier-protein. The polypeptide is Holo-[acyl-carrier-protein] synthase (Shewanella loihica (strain ATCC BAA-1088 / PV-4)).